Reading from the N-terminus, the 324-residue chain is Alkanal monooxygenase beta chain (324 aa).

The protein belongs to the bacterial luciferase oxidoreductase family. In terms of assembly, heterodimer of an alpha and a beta chain.

The enzyme catalyses a long-chain fatty aldehyde + FMNH2 + O2 = a long-chain fatty acid + hnu + FMN + H2O + 2 H(+). Functionally, light-emitting reaction in luminous bacteria. The specific role of the beta subunit is unknown, but it is absolutely required for bioluminescence activity. This is Alkanal monooxygenase beta chain (luxB) from Photorhabdus laumondii subsp. laumondii (strain DSM 15139 / CIP 105565 / TT01) (Photorhabdus luminescens subsp. laumondii).